Consider the following 420-residue polypeptide: Structure-specific endonuclease subunit SLX1 homolog (420 aa).

The region spanning 19-106 is the GIY-YIG domain; sequence SSDNTYPWQN…QHPLKSRRLR (88 aa). 2 disordered regions span residues 237–306 and 311–330; these read SVEE…AAVN and DDSADDGTTDGNEDGPDDVA. A compositionally biased stretch (low complexity) spans 247 to 266; sequence PSSCSVPPSTGSSAAPTPGA. The segment covering 279–301 has biased composition (basic and acidic residues); it reads VDPRLDSDDRDDNHQFESPDNHE. Positions 311–327 are enriched in acidic residues; it reads DDSADDGTTDGNEDGPD. Residues 348-405 form an SLX1-type zinc finger; that stretch reads CGHCHQSVYQELCIVCLNATCTYRAHLLCAAQAAVHPLGQSSPSETRLVPLRHSCPRC.

It belongs to the SLX1 family. As to quaternary structure, forms a heterodimer with a member of the SLX4 family. A divalent metal cation is required as a cofactor.

It is found in the nucleus. Catalytic subunit of a heterodimeric structure-specific endonuclease that resolves DNA secondary structures generated during DNA repair and recombination. Has endonuclease activity towards branched DNA substrates, introducing single-strand cuts in duplex DNA close to junctions with ss-DNA. This Monosiga brevicollis (Choanoflagellate) protein is Structure-specific endonuclease subunit SLX1 homolog.